We begin with the raw amino-acid sequence, 457 residues long: Omega-hydroxypalmitate O-feruloyl transferase (457 aa).

Active-site proton acceptor residues include His184 and Asp404.

It belongs to the plant acyltransferase family. Expressed in roots, seedlings, leaves, stems, flowers and siliques. Detected at the protein level in roots and in seed coats.

The catalysed reaction is 16-hydroxyhexadecanoate + (E)-feruloyl-CoA = 16-feruloyloxyhexadecanoate + CoA. Involved in the synthesis of aromatics of the suberin polymer. Specifically affects the accumulation of the ferulate constituent of suberin in roots and seeds, but has no effect on the content of p-coumarate or sinapate. The protein is Omega-hydroxypalmitate O-feruloyl transferase (HHT1) of Arabidopsis thaliana (Mouse-ear cress).